Reading from the N-terminus, the 526-residue chain is Cytochrome P450 52A5 (526 aa).

The chain crosses the membrane as a helical span at residues 18–38 (WYVIVPLAIIIYKVFDYFYVL). Residue Cys473 coordinates heme.

The protein belongs to the cytochrome P450 family. The cofactor is heme.

The protein localises to the membrane. Together with an NADPH cytochrome P450 the enzyme system catalyzes the terminal hydroxylation as the first step in the assimilation of alkanes and fatty acids. This is Cytochrome P450 52A5 (CYP52A5) from Candida maltosa (Yeast).